The chain runs to 461 residues: Ornithine decarboxylase (461 aa).

The residue at position 69 (Lys-69) is an N6-(pyridoxal phosphate)lysine. Residues Ser-200, Gly-237, and 274 to 277 (EPGR) contribute to the pyridoxal 5'-phosphate site. At Ser-303 the chain carries Phosphoserine; by CK2. 331 to 332 (YD) lines the substrate pocket. The active-site Proton donor; shared with dimeric partner is Cys-360. Residue Cys-360 is modified to S-nitrosocysteine. Asp-361 is a substrate binding site. Position 389 (Tyr-389) interacts with pyridoxal 5'-phosphate.

It belongs to the Orn/Lys/Arg decarboxylase class-II family. Homodimer. Only the dimer is catalytically active, as the active sites are constructed of residues from both monomers. Does not form a heterodimer with AZIN2. Requires pyridoxal 5'-phosphate as cofactor. In terms of tissue distribution, expressed during testis development in the outer part of the seminiferous tubules.

The enzyme catalyses L-ornithine + H(+) = putrescine + CO2. Its pathway is amine and polyamine biosynthesis; putrescine biosynthesis via L-ornithine pathway; putrescine from L-ornithine: step 1/1. With respect to regulation, inhibited by antizymes (AZs) OAZ1, OAZ2 and OAZ3 in response to polyamine levels. AZs inhibit the assembly of the functional homodimer by binding to ODC monomers. Additionally, OAZ1 targets ODC monomers for ubiquitin-independent proteolytic destruction by the 26S proteasome. Catalyzes the first and rate-limiting step of polyamine biosynthesis that converts ornithine into putrescine, which is the precursor for the polyamines, spermidine and spermine. Polyamines are essential for cell proliferation and are implicated in cellular processes, ranging from DNA replication to apoptosis. The protein is Ornithine decarboxylase (Odc1) of Mus musculus (Mouse).